A 194-amino-acid polypeptide reads, in one-letter code: Inosine triphosphate pyrophosphatase (194 aa).

8 to 13 (TGNANK) is an ITP binding site. A Mg(2+)-binding site is contributed by E47. Residues K59, 75 to 76 (DT), K92, 151 to 154 (FGWD), K174, and 179 to 180 (HR) each bind ITP.

This sequence belongs to the HAM1 NTPase family. In terms of assembly, homodimer. Mg(2+) serves as cofactor. It depends on Mn(2+) as a cofactor.

The protein resides in the cytoplasm. It localises to the nucleus. It catalyses the reaction ITP + H2O = IMP + diphosphate + H(+). It carries out the reaction dITP + H2O = dIMP + diphosphate + H(+). The catalysed reaction is XTP + H2O = XMP + diphosphate + H(+). Its function is as follows. Pyrophosphatase that hydrolyzes non-canonical purine nucleotides such as inosine triphosphate (ITP), deoxyinosine triphosphate (dITP) or xanthosine 5'-triphosphate (XTP) to their respective monophosphate derivatives. The enzyme does not distinguish between the deoxy- and ribose forms. Probably excludes non-canonical purines from RNA and DNA precursor pools, thus preventing their incorporation into RNA and DNA and avoiding chromosomal lesions. This Scheffersomyces stipitis (strain ATCC 58785 / CBS 6054 / NBRC 10063 / NRRL Y-11545) (Yeast) protein is Inosine triphosphate pyrophosphatase.